The following is a 955-amino-acid chain: 2-oxoglutarate dehydrogenase E1 component (955 aa).

Belongs to the alpha-ketoglutarate dehydrogenase family. Homodimer. Part of the 2-oxoglutarate dehydrogenase (OGDH) complex composed of E1 (2-oxoglutarate dehydrogenase), E2 (dihydrolipoamide succinyltransferase) and E3 (dihydrolipoamide dehydrogenase); the complex contains multiple copies of the three enzymatic components (E1, E2 and E3). Requires thiamine diphosphate as cofactor.

It catalyses the reaction N(6)-[(R)-lipoyl]-L-lysyl-[protein] + 2-oxoglutarate + H(+) = N(6)-[(R)-S(8)-succinyldihydrolipoyl]-L-lysyl-[protein] + CO2. Functionally, E1 component of the 2-oxoglutarate dehydrogenase (OGDH) complex which catalyzes the decarboxylation of 2-oxoglutarate, the first step in the conversion of 2-oxoglutarate to succinyl-CoA and CO(2). This chain is 2-oxoglutarate dehydrogenase E1 component, found in Bacillus cereus (strain G9842).